We begin with the raw amino-acid sequence, 726 residues long: Cyclic nucleotide-gated ion channel 2 (726 aa).

Residues 1–127 lie on the Cytoplasmic side of the membrane; sequence MPSHPNFIFR…SKRVQRWNRA (127 aa). The segment at 26–46 is disordered; sequence IDENSNLQINGGDSSSSGSDE. A compositionally biased stretch (low complexity) spans 36 to 45; that stretch reads GGDSSSSGSD. Residues 128 to 148 form a helical membrane-spanning segment; that stretch reads LLLARGMALAVDPLFFYALSI. The Extracellular portion of the chain corresponds to 149–162; it reads GRTTGPACLYMDGA. Residues 163 to 183 form a helical membrane-spanning segment; sequence FAAVVTVLRTCLDAVHLWHVW. Topologically, residues 184–219 are cytoplasmic; it reads LQFRLAYVSRESLVVGCGKLVWDPRAIASHYARSLT. Residues 220-240 traverse the membrane as a helical segment; it reads GFWFDVIVILPVPQAVFWLVV. Topologically, residues 241–254 are extracellular; the sequence is PKLIREEKVKLIMT. A helical transmembrane segment spans residues 255-275; sequence ILLLIFLFQFLPKIYHCICLM. The Cytoplasmic portion of the chain corresponds to 276-282; the sequence is RRMQKVT. A helical membrane pass occupies residues 283–303; the sequence is GYIFGTIWWGFALNLIAYFIA. The Extracellular segment spans residues 304–424; sequence SHVAGGCWYV…ANDLEPTSNW (121 aa). A helical membrane pass occupies residues 425 to 445; the sequence is LEVIFSIVMVLSGLLLFTLLI. Residues 446–726 lie on the Cytoplasmic side of the membrane; that stretch reads GNIQVFLHAV…MSIRPHDHLE (281 aa). Residues 531–661 and Asp600 contribute to the a nucleoside 3',5'-cyclic phosphate site; that span reads LFRG…ARYY. The interval 645–661 is calmodulin-binding; the sequence is FRYKFANERLKRTARYY. The region spanning 666 to 695 is the IQ domain; it reads RTWAAVNIQMAWRRRRKRTRGENIGGSMSP.

It belongs to the cyclic nucleotide-gated cation channel (TC 1.A.1.5) family. In terms of assembly, homotetramer or heterotetramer (Potential). Binds calmodulin-1/4 with a higher affinity than calmodulin-2/3/5. In terms of tissue distribution, expressed in the whole plant but only weakly in roots. Strongly expressed in the expanded cotyledons of 14-day-old seedlings and detected later in leaves after the transition to flowering. Also detected in flowers during organ senescence and in the dehiscence zone of siliques.

The protein resides in the cell membrane. In terms of biological role, acts as a cyclic nucleotide-gated ion channel. Permeable to potassium and calcium in a cyclic nucleotide-dependent fashion (cAMP or cGMP). Could also transport lithium, cesium and rubium and displays a strong selectivity against sodium. Seems to directly participate in pathogen-induced calcium influx. May function in homeostasis, re-establishing ionic balance after defense action and/or other stimuli. Could mediate the initiation of the developmentally regulated cell death programs. The sequence is that of Cyclic nucleotide-gated ion channel 2 (CNGC2) from Arabidopsis thaliana (Mouse-ear cress).